A 56-amino-acid polypeptide reads, in one-letter code: Ovomucoid (56 aa).

Residues 6-56 enclose the Kazal-like domain; the sequence is VDCSEYPKPECTAEERPICGSDNKTYGNKCNFCNAVVESNGTLTLRNFGKC. Disulfide bonds link Cys-8-Cys-38, Cys-16-Cys-35, and Cys-24-Cys-56. Residue Asn-45 is glycosylated (N-linked (GlcNAc...) asparagine).

The protein localises to the secreted. This is Ovomucoid from Bambusicola thoracicus (Chinese bamboo-partridge).